Reading from the N-terminus, the 471-residue chain is tRNA modification GTPase MnmE (471 aa).

Residues Arg26, Glu83, and Lys136 each coordinate (6S)-5-formyl-5,6,7,8-tetrahydrofolate. In terms of domain architecture, TrmE-type G spans 232-393 (GLRVVLAGQP…LRRRLLQLAG (162 aa)). Residue Asn242 participates in K(+) binding. GTP is bound by residues 242–247 (NVGKSS), 261–267 (TPIAGTT), 286–289 (DTAG), 354–357 (NKAD), and 374–376 (SAR). A Mg(2+)-binding site is contributed by Ser246. Thr261, Ile263, and Thr266 together coordinate K(+). Residue Thr267 coordinates Mg(2+). Lys471 lines the (6S)-5-formyl-5,6,7,8-tetrahydrofolate pocket.

It belongs to the TRAFAC class TrmE-Era-EngA-EngB-Septin-like GTPase superfamily. TrmE GTPase family. In terms of assembly, homodimer. Heterotetramer of two MnmE and two MnmG subunits. It depends on K(+) as a cofactor.

The protein localises to the cytoplasm. Exhibits a very high intrinsic GTPase hydrolysis rate. Involved in the addition of a carboxymethylaminomethyl (cmnm) group at the wobble position (U34) of certain tRNAs, forming tRNA-cmnm(5)s(2)U34. This Methylibium petroleiphilum (strain ATCC BAA-1232 / LMG 22953 / PM1) protein is tRNA modification GTPase MnmE.